The chain runs to 296 residues: Phosphoribosylaminoimidazole-succinocarboxamide synthase (296 aa).

This sequence belongs to the SAICAR synthetase family.

It carries out the reaction 5-amino-1-(5-phospho-D-ribosyl)imidazole-4-carboxylate + L-aspartate + ATP = (2S)-2-[5-amino-1-(5-phospho-beta-D-ribosyl)imidazole-4-carboxamido]succinate + ADP + phosphate + 2 H(+). It functions in the pathway purine metabolism; IMP biosynthesis via de novo pathway; 5-amino-1-(5-phospho-D-ribosyl)imidazole-4-carboxamide from 5-amino-1-(5-phospho-D-ribosyl)imidazole-4-carboxylate: step 1/2. The protein is Phosphoribosylaminoimidazole-succinocarboxamide synthase of Pelobacter propionicus (strain DSM 2379 / NBRC 103807 / OttBd1).